The sequence spans 97 residues: uncharacterized protein (97 aa).

To B.licheniformis xpaL1 and to B.subtilis XhlA.

This is an uncharacterized protein from Bacillus licheniformis.